We begin with the raw amino-acid sequence, 208 residues long: Probable thymidylate kinase (208 aa).

9 to 16 contacts ATP; it reads GIDGAGKS.

Belongs to the thymidylate kinase family.

It carries out the reaction dTMP + ATP = dTDP + ADP. This chain is Probable thymidylate kinase, found in Thermococcus gammatolerans (strain DSM 15229 / JCM 11827 / EJ3).